The primary structure comprises 96 residues: Prokineticin Bv8 (96 aa).

A signal peptide spans 1-19; it reads MKCFAQIVVLLLVIAFSHG. Residues 20-24 are may be important for binding to prokineticin receptor 2; it reads AVITG. Intrachain disulfides connect C26/C38, C32/C50, C37/C78, C60/C86, and C80/C95.

As to expression, expressed by the skin glands.

The protein localises to the secreted. Its function is as follows. Potent agonist for both PKR1/PROKR1 and PKR2/PROKR2, and inducer of a potent and long-lasting hyperalgesia. Shows an EC(50) of 0.264 nM, when tested on neuroblastoma cells (SH-SY5Y) which endogenously express mainly PKR2/PROKR2. Also potentiates capsaicin-induced TRPV1 current, when tested on DRG neurons. Induces a biphasic hyperalgesia to tactile and thermal stimuli after systemic injection of this protein into rat. The initial phase of hyperalgesia is caused by a local action on nociceptors, because intraplantar injection of this protein causes a strong and localized hyperalgesia with a similar time course to that of the initial phase of hyperalgesia seen with systemic injection. The secondary phase of hyperalgesia is not seen with local intraplantar injection and is therefore probably attributable to a central action of this protein. At subnanomolar concentrations, this protein both induces potent chemotaxis of macrophages and stimulates LPS-induced production of the pro-inflammatory cytokines IL-1 and IL-12. In vivo, this protein potently stimulates the contraction of the guinea-pig gastrointestinal (GI) smooth muscle (at nanomolar concentration). This Bombina variegata (Yellow-bellied toad) protein is Prokineticin Bv8.